Reading from the N-terminus, the 222-residue chain is Riboflavin kinase (222 aa).

A unknown region spans residues 1-92 (MVEAEDLQSL…VRIFNPDQRG (92 aa)). The riboflavin kinase stretch occupies residues 93 to 222 (YTLTGTVISG…DTIEVEITHD (130 aa)). Position 102–107 (102–107 (GLGEGR)) interacts with CDP. Mg(2+) contacts are provided by threonine 131 and asparagine 133. FMN-binding residues include threonine 188 and glutamate 196. CDP is bound at residue 201-204 (CELR).

It belongs to the archaeal riboflavin kinase family. Mg(2+) is required as a cofactor.

It catalyses the reaction riboflavin + CTP = CDP + FMN + H(+). It functions in the pathway cofactor biosynthesis; FMN biosynthesis; FMN from riboflavin (CTP route): step 1/1. Functionally, catalyzes the CTP-dependent phosphorylation of riboflavin (vitamin B2) to form flavin mononucleotide (FMN). In Methanoculleus marisnigri (strain ATCC 35101 / DSM 1498 / JR1), this protein is Riboflavin kinase (ribK).